A 531-amino-acid polypeptide reads, in one-letter code: Probable peptide ABC transporter periplasmic-binding protein y4tO (531 aa).

Positions 1–32 (MTISRRDLFKAGLAAGAALSVPSLLRAQTAVA) form a signal peptide, tat-type signal.

This sequence belongs to the bacterial solute-binding protein 5 family. Predicted to be exported by the Tat system. The position of the signal peptide cleavage has not been experimentally proven.

The protein localises to the periplasm. In terms of biological role, probably part of the binding-protein-dependent transport system y4tOPQRS for a peptide. This chain is Probable peptide ABC transporter periplasmic-binding protein y4tO, found in Sinorhizobium fredii (strain NBRC 101917 / NGR234).